Here is a 303-residue protein sequence, read N- to C-terminus: Glycine--tRNA ligase alpha subunit (303 aa).

Belongs to the class-II aminoacyl-tRNA synthetase family. As to quaternary structure, tetramer of two alpha and two beta subunits.

It is found in the cytoplasm. The catalysed reaction is tRNA(Gly) + glycine + ATP = glycyl-tRNA(Gly) + AMP + diphosphate. The sequence is that of Glycine--tRNA ligase alpha subunit from Bordetella pertussis (strain Tohama I / ATCC BAA-589 / NCTC 13251).